We begin with the raw amino-acid sequence, 213 residues long: High frequency lysogenization protein HflD homolog (213 aa).

It belongs to the HflD family.

The protein localises to the cytoplasm. It is found in the cell inner membrane. The protein is High frequency lysogenization protein HflD homolog of Nitrosococcus oceani (strain ATCC 19707 / BCRC 17464 / JCM 30415 / NCIMB 11848 / C-107).